The chain runs to 418 residues: Actin-related protein 3 (418 aa).

This sequence belongs to the actin family. ARP3 subfamily. In terms of assembly, component of the Arp2/3 complex composed of actr2/arp2, actr3/arp3, arpc1b, arpc2, arpc3, arpc4 and arpc5.

It is found in the cytoplasm. Its subcellular location is the cytoskeleton. The protein resides in the cell projection. The protein localises to the nucleus. Its function is as follows. ATP-binding component of the Arp2/3 complex, a multiprotein complex that mediates actin polymerization upon stimulation by nucleation-promoting factor (NPF). The Arp2/3 complex mediates the formation of branched actin networks in the cytoplasm, providing the force for cell motility. Seems to contact the pointed end of the daughter actin filament. In addition to its role in the cytoplasmic cytoskeleton, the Arp2/3 complex also promotes actin polymerization in the nucleus, thereby regulating gene transcription and repair of damaged DNA. The Arp2/3 complex promotes homologous recombination (HR) repair in response to DNA damage by promoting nuclear actin polymerization, leading to drive motility of double-strand breaks (DSBs). The sequence is that of Actin-related protein 3 (actr3) from Takifugu rubripes (Japanese pufferfish).